We begin with the raw amino-acid sequence, 354 residues long: Rhodopsin (354 aa).

At 1-36 (MNGTEGPNFYIPMSNKTGVVRSPFDYPQYYLAEPWK) the chain is on the extracellular side. Residue Asn-2 is glycosylated (N-linked (GlcNAc...) (hybrid) asparagine). Residue Asn-15 is glycosylated (N-linked (GlcNAc...) asparagine). Residues 37–61 (YSVLAAYMFLLILLGLPINFMTLYV) traverse the membrane as a helical segment. Residues 62 to 73 (TIQHKKLRTPLN) are Cytoplasmic-facing. Residues 74-96 (YILLNLGVCNHFMVLCGFTITMY) form a helical membrane-spanning segment. Residues 97 to 110 (TSLHGYFVFGQTGC) are Extracellular-facing. Cys-110 and Cys-187 are joined by a disulfide. A helical membrane pass occupies residues 111–133 (YFEGFFATLGGEIALWSLVVLAI). Positions 134–136 (ERY) match the 'Ionic lock' involved in activated form stabilization motif. The Cytoplasmic segment spans residues 134 to 152 (ERYIVVCKPMSNFRFGENH). The chain crosses the membrane as a helical span at residues 153 to 173 (AMMGVAFTWIMALACAVPPLF). Topologically, residues 174 to 202 (GWSRYIPEGMQCSCGVDYYTLKPEVNNES) are extracellular. The chain crosses the membrane as a helical span at residues 203-224 (FVIYMFVVHFLIPLIIISFCYG). At 225–252 (RLVCTVKEAAAQQQESATTQKAEKEVTR) the chain is on the cytoplasmic side. A helical transmembrane segment spans residues 253-274 (MVIIMVIFFLICWVPYAYVAFY). Over 275–286 (IFTHQGSEFGPI) the chain is Extracellular. A helical membrane pass occupies residues 287–308 (FMTVPAFFAKSSAIYNPVIYIM). An N6-(retinylidene)lysine modification is found at Lys-296. The Cytoplasmic portion of the chain corresponds to 309–354 (LNKQFRNCMITTLCCGKNPFGDDDASSAATSKTEATSVSTSQVSPA). 2 S-palmitoyl cysteine lipidation sites follow: Cys-322 and Cys-323. The tract at residues 332–354 (DASSAATSKTEATSVSTSQVSPA) is disordered. Residues 334–354 (SSAATSKTEATSVSTSQVSPA) are compositionally biased toward low complexity.

This sequence belongs to the G-protein coupled receptor 1 family. Opsin subfamily. Post-translationally, contains one covalently linked retinal chromophore. Upon light absorption, the covalently bound 11-cis-retinal is converted to all-trans-retinal. After hydrolysis of the Schiff base and release of the covalently bound all-trans-retinal, active rhodopsin is regenerated by binding of a fresh molecule of 11-cis-retinal. Detected in retina rod photoreceptor cell outer segments (at protein level). Detected in retina.

It localises to the membrane. The protein resides in the cell projection. It is found in the cilium. Its subcellular location is the photoreceptor outer segment. Photoreceptor required for image-forming vision at low light intensity. Required for photoreceptor cell viability after birth. Light-induced isomerization of 11-cis to all-trans retinal triggers a conformational change that activates signaling via G-proteins. Subsequent receptor phosphorylation mediates displacement of the bound G-protein alpha subunit by arrestin and terminates signaling. In Lithobates pipiens (Northern leopard frog), this protein is Rhodopsin (RHO).